The following is a 188-amino-acid chain: Ribose 1,5-bisphosphate phosphokinase PhnN (188 aa).

An ATP-binding site is contributed by 9–16 (GPSGAGKD).

Belongs to the ribose 1,5-bisphosphokinase family.

It catalyses the reaction alpha-D-ribose 1,5-bisphosphate + ATP = 5-phospho-alpha-D-ribose 1-diphosphate + ADP. Its pathway is metabolic intermediate biosynthesis; 5-phospho-alpha-D-ribose 1-diphosphate biosynthesis; 5-phospho-alpha-D-ribose 1-diphosphate from D-ribose 5-phosphate (route II): step 3/3. Catalyzes the phosphorylation of ribose 1,5-bisphosphate to 5-phospho-D-ribosyl alpha-1-diphosphate (PRPP). This is Ribose 1,5-bisphosphate phosphokinase PhnN from Pectobacterium atrosepticum (strain SCRI 1043 / ATCC BAA-672) (Erwinia carotovora subsp. atroseptica).